The primary structure comprises 155 residues: Ribosomal RNA large subunit methyltransferase H (155 aa).

S-adenosyl-L-methionine is bound by residues leucine 72, glycine 103, and 122–127 (LSTLTL).

This sequence belongs to the RNA methyltransferase RlmH family. As to quaternary structure, homodimer.

It localises to the cytoplasm. It carries out the reaction pseudouridine(1915) in 23S rRNA + S-adenosyl-L-methionine = N(3)-methylpseudouridine(1915) in 23S rRNA + S-adenosyl-L-homocysteine + H(+). Its function is as follows. Specifically methylates the pseudouridine at position 1915 (m3Psi1915) in 23S rRNA. The sequence is that of Ribosomal RNA large subunit methyltransferase H from Klebsiella pneumoniae (strain 342).